The chain runs to 208 residues: Large ribosomal subunit protein uL4 (208 aa).

Positions 45–83 are disordered; sequence RQGTHKSKTRAEVRGGGRKPYRQKGTGNARQGSTRSPLM. The span at 69 to 80 shows a compositional bias: polar residues; sequence GTGNARQGSTRS.

It belongs to the universal ribosomal protein uL4 family. As to quaternary structure, part of the 50S ribosomal subunit.

Functionally, one of the primary rRNA binding proteins, this protein initially binds near the 5'-end of the 23S rRNA. It is important during the early stages of 50S assembly. It makes multiple contacts with different domains of the 23S rRNA in the assembled 50S subunit and ribosome. Forms part of the polypeptide exit tunnel. The protein is Large ribosomal subunit protein uL4 of Chlorobium luteolum (strain DSM 273 / BCRC 81028 / 2530) (Pelodictyon luteolum).